Consider the following 60-residue polypeptide: Large ribosomal subunit protein bL32 (60 aa).

The tract at residues 1-25 (MAVQQNKKSPSKRGMHRSHNALNVP) is disordered. Residues 9–19 (SPSKRGMHRSH) show a composition bias toward basic residues.

The protein belongs to the bacterial ribosomal protein bL32 family.

In Polaromonas naphthalenivorans (strain CJ2), this protein is Large ribosomal subunit protein bL32.